Here is a 313-residue protein sequence, read N- to C-terminus: Ethylene-responsive transcription factor ERN2 (313 aa).

Residues 1 to 10 show a composition bias toward basic and acidic residues; it reads MEIQFDEPKK. Residues 1–29 form a disordered region; sequence MEIQFDEPKKSLRPKKVNKFKGRNKKSET. Over residues 11–24 the composition is skewed to basic residues; sequence SLRPKKVNKFKGRN. A DNA-binding region (AP2/ERF) is located at residues 32-89; the sequence is KFVGVRQRPSGRYVAEIKDTTQNIRMWLGTFETAEEAARAYDEAATLLRGSKTRTNFV. Disordered regions lie at residues 108–143 and 157–204; these read NRKK…TSST and TSAS…SSST. 2 stretches are compositionally biased toward low complexity: residues 122 to 143 and 157 to 193; these read SSTT…TSST and TSAS…TNVN.

The protein belongs to the AP2/ERF transcription factor family. ERF subfamily. As to expression, expressed in roots, root hairs and leaves. Expressed in root epidermis and root hairs.

It localises to the nucleus. Functionally, transcription factor involved in symbiotic nodule signaling in response to rhizobial Nod factors (NFs). Binds to the GCC box (NF-responsive box) of ENOD11 promoter. Acts as a transcriptional activator of NF-responsive box-containing target gene promoters in root hairs. Involved in early stages of root nodule development. Functions redundantly with ERN1. Is essential with ERN1 for the initiation of root hair infection, and nodule organogenesis and development. Required for accurate expression of the NF signaling genes ENOD11 and ENOD12. The protein is Ethylene-responsive transcription factor ERN2 of Medicago truncatula (Barrel medic).